The chain runs to 281 residues: Transcription factor LBX1 (281 aa).

The segment covering 1–20 (MTSKEDGKAAPGEERRRSPL) has biased composition (basic and acidic residues). The segment at 1–35 (MTSKEDGKAAPGEERRRSPLDHLPPPANSNKPLTP) is disordered. The segment at residues 125 to 184 (RRKSRTAFTNHQIYELEKRFLYQKYLSPADRDQIAQQLGLTNAQVITWFQNRRAKLKRDL) is a DNA-binding region (homeobox). The interval 214–281 (NSEATAGGGG…EEDEEIDVDD (68 aa)) is disordered. A compositionally biased stretch (polar residues) spans 253 to 267 (SPASPLTDQPASSQD). Residues 268–281 (CSEDEEDEEIDVDD) show a composition bias toward acidic residues.

Interacts with SKOR1 which acts as a transcriptional corepressor.

It localises to the nucleus. Transcription factor required for the development of GABAergic interneurons in the dorsal horn of the spinal cord and migration and further development of hypaxial muscle precursor cells for limb muscles, diaphragm and hypoglossal cord. This is Transcription factor LBX1 (LBX1) from Homo sapiens (Human).